The sequence spans 199 residues: Copper transport protein CTR4 (199 aa).

Transmembrane regions (helical) follow at residues 62–82 (KGMF…IELI) and 152–172 (AFFV…FIFL).

It belongs to the copper transporter (Ctr) (TC 1.A.56) family. SLC31A subfamily.

Its subcellular location is the membrane. In terms of biological role, required for high affinity copper (probably reduced Cu I) transport into the cell. Plays a role in fungal pathogenesis during host infection. The protein is Copper transport protein CTR4 of Cryptococcus neoformans var. grubii serotype A (strain H99 / ATCC 208821 / CBS 10515 / FGSC 9487) (Filobasidiella neoformans var. grubii).